Consider the following 211-residue polypeptide: Mediator of RNA polymerase II transcription subunit 20 (211 aa).

Belongs to the Mediator complex subunit 20 family. In terms of assembly, component of the Mediator complex.

Its subcellular location is the nucleus. Functionally, component of the Mediator complex, a coactivator involved in the regulated transcription of nearly all RNA polymerase II-dependent genes. Mediator functions as a bridge to convey information from gene-specific regulatory proteins to the basal RNA polymerase II transcription machinery. Mediator is recruited to promoters by direct interactions with regulatory proteins and serves as a scaffold for the assembly of a functional preinitiation complex with RNA polymerase II and the general transcription factors. The polypeptide is Mediator of RNA polymerase II transcription subunit 20 (MED20) (Gallus gallus (Chicken)).